A 611-amino-acid polypeptide reads, in one-letter code: DNA-directed RNA polymerase subunit Rpo2C (611 aa).

Zn(2+) is bound by residues Cys-547, Cys-550, Cys-565, and Cys-568.

The protein belongs to the RNA polymerase beta chain family. Part of the RNA polymerase complex. It depends on Zn(2+) as a cofactor.

The protein localises to the cytoplasm. It catalyses the reaction RNA(n) + a ribonucleoside 5'-triphosphate = RNA(n+1) + diphosphate. DNA-dependent RNA polymerase (RNAP) catalyzes the transcription of DNA into RNA using the four ribonucleoside triphosphates as substrates. The Rpo2 subunit (Rpo2N and Rpo2C in this organism) is implicated in DNA promoter recognition and in nucleotide binding. In Methanococcus vannielii (strain ATCC 35089 / DSM 1224 / JCM 13029 / OCM 148 / SB), this protein is DNA-directed RNA polymerase subunit Rpo2C.